Reading from the N-terminus, the 470-residue chain is Glutamyl-tRNA reductase (470 aa).

Substrate is bound by residues 49-52, Ser109, 114-116, and Gln120; these read TCNR and ESQ. Cys50 acts as the Nucleophile in catalysis. NADP(+) is bound at residue 223–228; that stretch reads GAGAVG.

It belongs to the glutamyl-tRNA reductase family. As to quaternary structure, homodimer.

It carries out the reaction (S)-4-amino-5-oxopentanoate + tRNA(Glu) + NADP(+) = L-glutamyl-tRNA(Glu) + NADPH + H(+). It functions in the pathway porphyrin-containing compound metabolism; protoporphyrin-IX biosynthesis; 5-aminolevulinate from L-glutamyl-tRNA(Glu): step 1/2. Catalyzes the NADPH-dependent reduction of glutamyl-tRNA(Glu) to glutamate 1-semialdehyde (GSA). In Frankia alni (strain DSM 45986 / CECT 9034 / ACN14a), this protein is Glutamyl-tRNA reductase.